The primary structure comprises 445 residues: Nuclear envelope integral membrane protein 1 (445 aa).

Residues 1 to 44 form the signal peptide; the sequence is MAGGMKVAVLPAVGAGPWSWGAGGCGAVRLLLVLFGCFVCGSAG. Asn-125 carries N-linked (GlcNAc...) asparagine glycosylation. The next 5 helical transmembrane spans lie at 161–181, 186–206, 216–236, 245–265, and 289–309; these read PKLFLIFLLGLTLFFCGDLLS, FYYSTGMSVGIVASLLIIIFI, PIYIILVGGWSFSLYLIQLVF, CYWQYLLSYVLAVGFMSFAVC, and LCFMYSSIQIPHIALAIVVIA. The segment at 186-297 is a; required for its colocalization with lamins at the nuclear envelope; it reads FYYSTGMSVG…GLCFMYSSIQ (112 aa). The segment at 336 to 405 is b; required for interaction with RAN-GTP; sequence TVPPRLLTEE…LTPNEVSVHE (70 aa). Residues 336–445 form a required for nuclear localization region; it reads TVPPRLLTEE…LVVQQNSFLT (110 aa). A phosphoserine mark is found at Ser-368, Ser-424, and Ser-425. Residues 418 to 430 are compositionally biased toward acidic residues; that stretch reads ELSEETSSEEEDS. Residues 418-445 form a disordered region; it reads ELSEETSSEEEDSDSRYPLVVQQNSFLT.

It belongs to the NEMP family. As to quaternary structure, homooligomer. Interacts with RAN-GTP. Interacts with EMD. Phosphorylation may regulate its interaction with RAN-GTP.

The protein localises to the nucleus inner membrane. It is found in the nucleus envelope. In terms of biological role, together with EMD, contributes to nuclear envelope stiffness in germ cells. Required for female fertility. Essential for normal erythropoiesis. Required for efficient nuclear envelope opening and enucleation during the late stages of erythroblast maturation. The polypeptide is Nuclear envelope integral membrane protein 1 (NEMP1) (Bos taurus (Bovine)).